A 166-amino-acid chain; its full sequence is Lithostathine-1-beta (166 aa).

A signal peptide spans Met-1–Gly-22. O-linked (GalNAc...) threonine glycosylation is present at Thr-27. The region spanning Ile-34–Phe-164 is the C-type lectin domain. 3 disulfides stabilise this stretch: Cys-36–Cys-47, Cys-64–Cys-162, and Cys-137–Cys-154.

Post-translationally, all O-linked glycans consist of Gal-GlcNAc-Gal-GalNAc tetrasaccharide core and get elongated (microheterogeneity).

Its subcellular location is the secreted. Its function is as follows. Might act as an inhibitor of spontaneous calcium carbonate precipitation. May be associated with neuronal sprouting in brain, and with brain and pancreas regeneration. The protein is Lithostathine-1-beta (REG1B) of Homo sapiens (Human).